A 175-amino-acid chain; its full sequence is RNA pyrophosphohydrolase (175 aa).

Positions 8 to 159 (PYRTCVGMML…KRPVYERVVK (152 aa)) constitute a Nudix hydrolase domain. The Nudix box motif lies at 47–68 (GGVDPGEDPWTAAKRELYEETS).

The protein belongs to the Nudix hydrolase family. RppH subfamily. A divalent metal cation is required as a cofactor.

Functionally, accelerates the degradation of transcripts by removing pyrophosphate from the 5'-end of triphosphorylated RNA, leading to a more labile monophosphorylated state that can stimulate subsequent ribonuclease cleavage. The chain is RNA pyrophosphohydrolase from Rhodopseudomonas palustris (strain BisB18).